Reading from the N-terminus, the 532-residue chain is Protein kinase domain-containing protein ppk9 (532 aa).

Residues W23–F274 form the Protein kinase domain. Residues L29 to V37 and K52 contribute to the ATP site. D145 serves as the catalytic Proton acceptor. Over residues P316 to P346 the composition is skewed to polar residues. The interval P316–D349 is disordered.

It is found in the cytoplasm. It localises to the nucleus. The protein localises to the cytoskeleton. The protein resides in the microtubule organizing center. Its subcellular location is the spindle pole body. In Schizosaccharomyces pombe (strain 972 / ATCC 24843) (Fission yeast), this protein is Protein kinase domain-containing protein ppk9 (ppk9).